We begin with the raw amino-acid sequence, 265 residues long: Speedy protein E8 (265 aa).

The disordered stretch occupies residues 1–80 (MGQILGKIMM…EPEKELAPEP (80 aa)). Over residues 66–80 (DESDDEPEKELAPEP) the composition is skewed to acidic residues.

This sequence belongs to the Speedy/Ringo family.

The protein is Speedy protein E8 of Homo sapiens (Human).